The following is a 472-amino-acid chain: Glycosyl hydrolase family 109 protein (472 aa).

The segment at residues 1 to 35 is a signal peptide (tat-type signal); the sequence is MSQTPAVSRRLLLGSAAATGALATGIGSAAPVAAA. NAD(+) contacts are provided by residues 68 to 69, aspartate 90, 139 to 142, histidine 145, 159 to 160, and asparagine 188; these read NR, WEFH, and EL. Substrate-binding positions include tyrosine 217, arginine 236, 248 to 251, and tyrosine 330; that span reads YPMH. Tyrosine 248 is an NAD(+) binding site.

Belongs to the Gfo/Idh/MocA family. Glycosyl hydrolase 109 subfamily. The cofactor is NAD(+). Predicted to be exported by the Tat system. The position of the signal peptide cleavage has not been experimentally proven.

Glycosidase. Has no alpha-N-acetylgalactosaminidase activity. The protein is Glycosyl hydrolase family 109 protein of Streptomyces coelicolor (strain ATCC BAA-471 / A3(2) / M145).